The sequence spans 197 residues: Putative WUSCHEL-related homeobox 10 (197 aa).

The segment at residues 75-139 (STRPRWTPTT…NRRARSKRKQ (65 aa)) is a DNA-binding region (homeobox; WUS-type). The disordered stretch occupies residues 132-168 (RARSKRKQPPTTTITSSQADDAAVTTTEERGRCGDDS). The span at 140–150 (PPTTTITSSQA) shows a compositional bias: polar residues.

Belongs to the WUS homeobox family.

Its subcellular location is the nucleus. Its function is as follows. Potential transcription factor that plays a central role during developmental processes. This chain is Putative WUSCHEL-related homeobox 10 (WOX10), found in Arabidopsis thaliana (Mouse-ear cress).